Consider the following 498-residue polypeptide: Elastase (498 aa).

Positions 1–23 (MKKVSTLDLLFVAIMGVSPAAFA) are cleaved as a signal peptide. A propeptide spanning residues 24 to 197 (ADLIDVSKLP…VLDQWEGLAH (174 aa)) is cleaved from the precursor. The cysteines at positions 227 and 255 are disulfide-linked. A Ca(2+)-binding site is contributed by Asp333. His337 is a binding site for Zn(2+). Residue Glu338 is part of the active site. Positions 341 and 361 each coordinate Zn(2+). Ca(2+) contacts are provided by Glu369, Glu372, Asp380, and Leu382. His420 serves as the catalytic Proton donor. A disulfide bond links Cys467 and Cys494.

The protein belongs to the peptidase M4 family. As to quaternary structure, monomer. Ca(2+) serves as cofactor. Requires Zn(2+) as cofactor. In terms of processing, made as a membrane-associated pre-pro-protein, which is exported to the periplasm (yielding pro-elastase) with removal of the signal peptide. Under certain conditions pro-elastase can accumulate. The pro-peptide is removed in the periplasm yielding a (mature length) 33 kDa protein, probably by autocatalysis. The pro-peptide probably remains associated with elastase and can be secreted. Further alterations (perhaps processing) seems to be required before secretion into the extracellular space.

The protein localises to the secreted. It carries out the reaction Hydrolysis of proteins including elastin, collagen types III and IV, fibronectin and immunoglobulin A, generally with bulky hydrophobic group at P1'. Insulin B chain cleavage pattern identical to that of thermolysin, but specificity differs in other respects.. Inhibited by phosphoramidon. Cleaves host elastin, collagen, IgG, and several complement components as well as endogenous pro-aminopeptidase. Autocatalyses processing of its pro-peptide. Processes the pro-peptide of pro-chitin-binding protein (cbpD). Involved in the pathogenesis of P.aeruginosa infections. In Pseudomonas aeruginosa (strain ATCC 15692 / DSM 22644 / CIP 104116 / JCM 14847 / LMG 12228 / 1C / PRS 101 / PAO1), this protein is Elastase (lasB).